A 195-amino-acid polypeptide reads, in one-letter code: RILP-like protein 2 (195 aa).

Residues 8 to 92 (SPTQAFDKDV…RTETDRVVAE (85 aa)) enclose the RH1 domain. Positions 58 to 149 (LEMFETMVNK…AQEELQLYKS (92 aa)) form a coiled coil. The 71-residue stretch at 115–185 (RPRFTMQELK…ITEESKEKST (71 aa)) folds into the RH2 domain.

Belongs to the RILPL family.

The protein resides in the cytoplasm. The protein localises to the cytosol. It localises to the cytoskeleton. It is found in the microtubule organizing center. Its subcellular location is the centrosome. The protein resides in the cell projection. The protein localises to the cilium. In terms of biological role, involved in cell shape and neuronal morphogenesis, positively regulating the establishment and maintenance of dendritic spines. Plays a role in cellular protein transport. The chain is RILP-like protein 2 (rilpl2) from Danio rerio (Zebrafish).